The following is a 1346-amino-acid chain: Zinc finger protein 541 (1346 aa).

Disordered stretches follow at residues 1-34 and 113-136; these read MDQY…DTLN and EADE…SSPQ. The segment covering 21–32 has biased composition (polar residues); that stretch reads FSESQGLNCSDT. 3 consecutive C2H2-type zinc fingers follow at residues 140–162, 168–190, and 196–220; these read LDCS…YLTH, HVCK…MLTH, and FVCI…YEVH. Disordered stretches follow at residues 235–271, 283–328, 437–472, and 578–744; these read ACGD…LLPH, VHQK…AAPA, SAVP…EDAL, and SQLP…GGYR. 2 stretches are compositionally biased toward low complexity: residues 294-323 and 440-458; these read PAGA…PAGP and PSRE…SPSE. Residues 671–685 show a composition bias toward polar residues; it reads PDISSLAKQLRSSKG. The C2H2-type 4 zinc-finger motif lies at 838 to 860; sequence FVCKNCSQMFYTEKGLSSHMCFH. A disordered region spans residues 931–971; it reads AMGQEKDGEERDSKESSQQRKRKKRPPPSTAGEPGPAGCHQ. Positions 934-948 are enriched in basic and acidic residues; it reads QEKDGEERDSKESSQ. Residues 1053–1145 form the ELM2 domain; the sequence is PHINIGSRFQ…VALETLLLRG (93 aa). The SANT domain maps to 1160–1211; sequence TGSDVWTPIEKRLFKKAFYAHKKDFYLIHKMIQTKTVAQCVEYYYIWKKMIK. The disordered stretch occupies residues 1224–1281; it reads VKREPEEVERTEEKVPCSPRERPSHHPTPKLKTKSYRRESILSSSPNAGSKRTPELLG. Positions 1234 to 1247 are enriched in basic and acidic residues; sequence TEEKVPCSPRERPS. The span at 1248-1258 shows a compositional bias: basic residues; sequence HHPTPKLKTKS. The span at 1264-1273 shows a compositional bias: polar residues; the sequence is ILSSSPNAGS. The segment at 1289–1311 adopts a C2H2-type 5 zinc-finger fold; that stretch reads FPCRECERVFDKIKSRNAHMKRH.

As to quaternary structure, interacts with DNTTIP1. Identified in a complex with KCDT19, HDAC1 and HSPA2. Component of a histone deacetylase complex containing DNTTIP1, ZNF541, HDAC1 and HDAC2. Identified in a complex with HDAC1, HDAC2, DNTTIP1 and KCTD19.

It localises to the nucleus. Functionally, transcription regulator which is essential for male fertility and for the completion of meiotic prophase in spermatocytes. Regulates progression of the pachytene stage of meiotic prophase by activating the expression of genes involved in meiosis during spermatogenesis. Maintains the repression of pre-pachytene transcriptional programs, including meiotic double-strand breaks (DSB) formation genes in pachytene spermatocytes and suppresses aberrant DSB formation after mid-pachytene, thus ensuring meiosis progression. The sequence is that of Zinc finger protein 541 (ZNF541) from Homo sapiens (Human).